Consider the following 617-residue polypeptide: MAFPHRPDAPELPDFSMLKRLARDQLIYLLEQLPGKKDLFIEADLMSPLDRIANVSILKQHEVDKLYKVENKPALSSNEQLCFLVRPRIKNMRYIASLVNADKLAGRTRKYKVIFSPQKFYACEMVLEEEGIYGDVSCDEWAFSLLPLDVDLLSMELPEFFRDYFLEGDQRWINTVAQALHLLSTLYGPFPNCYGIGRCAKMAYELWRNLEEEEDGETKGRRPEIGHIFLLDRDVDFVTALCSQVVYEGLVDDTFRIKCGSVDFGPEVTSSDKSLKVLLNAEDKVFNEIRNEHFSNVFGFLSQKARNLQAQYDRRRGMDIKQMKNFVSQELKGLKQEHRLLSLHIGACESIMKKKTKQDFQELIKTEHALLEGFNIRESTSYIEEHIDRQVSPIESLRLMCLLSITENGLIPKDYRSLKTQYLQSYGPEHLLTFSNLRRAGLLTEQAPGDTLTAVESKVSKLVTDKAAGKITDAFSSLAKRSNFRAISKKLNLIPRVDGEYDLKVPRDMAYVFGGAYVPLSCRIIEQVLERRSWQGLDEVVRLLNCSDFAFTDMTKEDKASSESLRLILVVFLGGCTFSEISALRFLGREKGYRFIFLTTAVTNSARLMEAMSEVKA.

The residue at position 2 (Ala-2) is an N-acetylalanine.

Belongs to the STXBP/unc-18/SEC1 family. Interacts with RAB11A and VIPAS39. Interacts with RAB25. Associates with adapter protein complex 3 (AP-3), clathrin:AP-3 and clathrin:HGS complexes. As to quaternary structure, (Microbial infection) Interacts with M.tuberculosis PtpA. Post-translationally, phosphorylated on tyrosine residues. In terms of processing, (Microbial infection) Dephosphorylated by M.tuberculosis PtpA, which induces the reduction of host phagolysosome fusion in M.tuberculosis-infected macrophages. In terms of tissue distribution, ubiquitous; highly expressed in testis and low expression in the lung.

It localises to the late endosome membrane. The protein resides in the lysosome membrane. The protein localises to the early endosome. It is found in the cytoplasmic vesicle. Its subcellular location is the clathrin-coated vesicle. It localises to the recycling endosome. In terms of biological role, may play a role in vesicle-mediated protein trafficking to lysosomal compartments and in membrane docking/fusion reactions of late endosomes/lysosomes. Required for proper trafficking and targeting of the collagen-modifying enzyme lysyl hydroxylase 3 (LH3) to intracellular collagen. Mediates phagolysosomal fusion in macrophages. Proposed to be involved in endosomal maturation implicating VIPAS39. In epithelial cells, the VPS33B:VIPAS39 complex may play a role in the apical recycling pathway and in the maintenance of the apical-basolateral polarity. Seems to be involved in the sorting of specific cargos from the trans-Golgi network to alpha-granule-destined multivesicular bodies (MVBs) promoting MVBs maturation in megakaryocytes. The polypeptide is Vacuolar protein sorting-associated protein 33B (VPS33B) (Homo sapiens (Human)).